Reading from the N-terminus, the 224-residue chain is ATP-dependent dethiobiotin synthetase BioD (224 aa).

12 to 17 (GVGKTF) is an ATP binding site. Threonine 16 is a Mg(2+) binding site. Lysine 37 is a catalytic residue. Threonine 41 provides a ligand contact to substrate. Residue glutamate 107 coordinates Mg(2+). ATP contacts are provided by residues 107 to 110 (EGAG), 167 to 168 (GS), 197 to 199 (PEG), and glutamate 204.

Belongs to the dethiobiotin synthetase family. Homodimer. Mg(2+) serves as cofactor.

The protein resides in the cytoplasm. It carries out the reaction (7R,8S)-7,8-diammoniononanoate + CO2 + ATP = (4R,5S)-dethiobiotin + ADP + phosphate + 3 H(+). It participates in cofactor biosynthesis; biotin biosynthesis; biotin from 7,8-diaminononanoate: step 1/2. Functionally, catalyzes a mechanistically unusual reaction, the ATP-dependent insertion of CO2 between the N7 and N8 nitrogen atoms of 7,8-diaminopelargonic acid (DAPA, also called 7,8-diammoniononanoate) to form a ureido ring. The sequence is that of ATP-dependent dethiobiotin synthetase BioD from Corynebacterium glutamicum (strain R).